We begin with the raw amino-acid sequence, 407 residues long: Imidazolonepropionase (407 aa).

Fe(3+) contacts are provided by His75 and His77. The Zn(2+) site is built by His75 and His77. 4-imidazolone-5-propanoate-binding residues include Arg84, Tyr147, and His180. Tyr147 contributes to the N-formimidoyl-L-glutamate binding site. Fe(3+) is bound at residue His245. A Zn(2+)-binding site is contributed by His245. Gln248 contacts 4-imidazolone-5-propanoate. Asp320 provides a ligand contact to Fe(3+). Asp320 serves as a coordination point for Zn(2+). Asn322 and Gly324 together coordinate N-formimidoyl-L-glutamate. Ser325 contacts 4-imidazolone-5-propanoate.

Belongs to the metallo-dependent hydrolases superfamily. HutI family. It depends on Zn(2+) as a cofactor. Fe(3+) is required as a cofactor.

It is found in the cytoplasm. The catalysed reaction is 4-imidazolone-5-propanoate + H2O = N-formimidoyl-L-glutamate. It participates in amino-acid degradation; L-histidine degradation into L-glutamate; N-formimidoyl-L-glutamate from L-histidine: step 3/3. Its function is as follows. Catalyzes the hydrolytic cleavage of the carbon-nitrogen bond in imidazolone-5-propanoate to yield N-formimidoyl-L-glutamate. It is the third step in the universal histidine degradation pathway. The chain is Imidazolonepropionase from Pseudoalteromonas atlantica (strain T6c / ATCC BAA-1087).